We begin with the raw amino-acid sequence, 1235 residues long: Structural maintenance of chromosomes protein 1B (1235 aa).

Position 32–39 (32–39 (GPNGSGKS)) interacts with ATP. The stretch at 156 to 490 (EEISTSGELI…RSELQNAGID (335 aa)) forms a coiled coil. Residues 514–629 (SVFGRLFDLC…ETMEEARHIA (116 aa)) form the SMC hinge domain. N6-acetyllysine is present on residues Lys-648 and Lys-713. 3 coiled-coil regions span residues 666 to 934 (WDEK…LDCK), 970 to 994 (EKEE…SDQE), and 1022 to 1049 (RALE…KEAR). Position 1033 is an N6-acetyllysine (Lys-1033).

Belongs to the SMC family. SMC1 subfamily. Forms a heterodimer with SMC3. Component of a meiosis-specific cohesin complex, probably composed of the SMC1B and SMC3 heterodimer attached via their SMC hinge domain, RAD21 (or its meiosis-specific related protein REC8), which link them, and STAG3, which interacts with RAD21 or REC8. The cohesin complex interacts with the cohesin loading complex subunits NIPBL/Scc2 (via HEAT repeats) and MAU2/Scc4. NIPBL directly contacts all members of the complex, RAD21, SMC1A/B, SMC3 and STAG1.

The protein localises to the nucleus. It localises to the chromosome. It is found in the centromere. In terms of biological role, meiosis-specific component of cohesin complex. Required for the maintenance of meiotic cohesion, but not, or only to a minor extent, for its establishment. Contributes to axial element (AE) formation and the organization of chromatin loops along the AE. Plays a key role in synapsis, recombination and chromosome movements. The cohesin complex is required for the cohesion of sister chromatids after DNA replication. The cohesin complex apparently forms a large proteinaceous ring within which sister chromatids can be trapped. At anaphase, the complex is cleaved and dissociates from chromatin, allowing sister chromatids to segregate. The meiosis-specific cohesin complex probably replaces mitosis specific cohesin complex when it dissociates from chromatin during prophase I. In Homo sapiens (Human), this protein is Structural maintenance of chromosomes protein 1B (SMC1B).